Consider the following 23-residue polypeptide: Basic phospholipase A2 Smb-N6 (23 aa).

Belongs to the phospholipase A2 family. Group II subfamily. Ca(2+) is required as a cofactor. Post-translationally, contains 7 disulfide bonds. As to expression, expressed by the venom gland.

It is found in the secreted. The enzyme catalyses a 1,2-diacyl-sn-glycero-3-phosphocholine + H2O = a 1-acyl-sn-glycero-3-phosphocholine + a fatty acid + H(+). Functionally, snake venom phospholipase A2 (PLA2) that shows myotoxic activities. PLA2 catalyzes the calcium-dependent hydrolysis of the 2-acyl groups in 3-sn-phosphoglycerides. The sequence is that of Basic phospholipase A2 Smb-N6 from Sistrurus miliarius barbouri (Dusky pigmy rattlesnake).